The chain runs to 163 residues: Keratin-associated protein 11-1 (163 aa).

4 consecutive repeat copies span residues 111 to 120, 121 to 130, 131 to 140, and 141 to 150. The segment at 111–150 is 4 X 10 AA approximate repeats; it reads CQPLGGISSVCQPVGGISTVCQPVGGVSTVCQPACGVSRT.

It belongs to the PMG family. Expressed in the upper matrix and in the entire hair cortex.

In the hair cortex, hair keratin intermediate filaments are embedded in an interfilamentous matrix, consisting of hair keratin-associated proteins (KRTAP), which are essential for the formation of a rigid and resistant hair shaft through their extensive disulfide bond cross-linking with abundant cysteine residues of hair keratins. The matrix proteins include the high-sulfur and high-glycine-tyrosine keratins. The protein is Keratin-associated protein 11-1 (KRTAP11-1) of Homo sapiens (Human).